Consider the following 155-residue polypeptide: SsrA-binding protein (155 aa).

This sequence belongs to the SmpB family.

It localises to the cytoplasm. In terms of biological role, required for rescue of stalled ribosomes mediated by trans-translation. Binds to transfer-messenger RNA (tmRNA), required for stable association of tmRNA with ribosomes. tmRNA and SmpB together mimic tRNA shape, replacing the anticodon stem-loop with SmpB. tmRNA is encoded by the ssrA gene; the 2 termini fold to resemble tRNA(Ala) and it encodes a 'tag peptide', a short internal open reading frame. During trans-translation Ala-aminoacylated tmRNA acts like a tRNA, entering the A-site of stalled ribosomes, displacing the stalled mRNA. The ribosome then switches to translate the ORF on the tmRNA; the nascent peptide is terminated with the 'tag peptide' encoded by the tmRNA and targeted for degradation. The ribosome is freed to recommence translation, which seems to be the essential function of trans-translation. This chain is SsrA-binding protein, found in Bacillus mycoides (strain KBAB4) (Bacillus weihenstephanensis).